An 880-amino-acid chain; its full sequence is GAS2-like protein 2 (880 aa).

In terms of domain architecture, Calponin-homology (CH) spans E32 to W159. A disordered region spans residues R180–P200. A compositionally biased stretch (pro residues) spans L185 to R198. Positions C201–R273 constitute a GAR domain. Disordered regions lie at residues S283–F360, W372–P437, E489–R533, and A676–V880. Over residues G301 to Q315 the composition is skewed to polar residues. Residues Q438 to V880 form an interaction with ADORA2A region. Positions R506–P515 are enriched in pro residues. Positions Q725–A734 are enriched in polar residues. Basic residues-rich tracts occupy residues K757 to R767 and L774 to D785.

This sequence belongs to the GAS2 family. Interacts with ADORA2A (via its cytoplasmic C-terminal domain). Interacts with GNAS, GNAL, GNAQ, and GNA13. Interacts with MAPRE1. In terms of tissue distribution, expressed in bronchial and nasal epithelial cells (at protein level). Expressed in brain, kidney, lung, testis, fallopian tubes, and skeletal muscle. Expressed at low levels in stomach and colon.

It is found in the cytoplasm. Its subcellular location is the cytoskeleton. It localises to the cell membrane. The protein resides in the stress fiber. The protein localises to the cilium basal body. In terms of biological role, involved in the cross-linking of microtubules and microfilaments. Regulates microtubule dynamics and stability by interacting with microtubule plus-end tracking proteins, such as MAPRE1, to regulate microtubule growth along actin stress fibers. Enhances ADORA2-mediated adenylyl cyclase activation by acting as a scaffold to recruit trimeric G-protein complexes to ADORA2A. Regulates ciliary orientation and performance in cells located in the airway. This is GAS2-like protein 2 (GAS2L2) from Homo sapiens (Human).